A 366-amino-acid polypeptide reads, in one-letter code: Prostaglandin F2-alpha receptor (366 aa).

Residues 1 to 31 (MSINSSKQPASSAAGLIANTTCQTENRLSVF) lie on the Extracellular side of the membrane. 2 N-linked (GlcNAc...) asparagine glycosylation sites follow: N4 and N19. Residues 32 to 55 (FSIIFMTVGIVSNSLAIAILMKAY) traverse the membrane as a helical segment. Topologically, residues 56 to 69 (QRFRRKSKASFLLL) are cytoplasmic. The helical transmembrane segment at 70–90 (ASGLVITDFFGHLINGGIAVF) threads the bilayer. Residues 91-109 (VYASDKDWIRFDQSNILCS) are Extracellular-facing. A disulfide bridge links C108 with C186. Residues 110–131 (VFGISMVFSGLCPLFLGSTMAI) form a helical membrane-spanning segment. Over 132–152 (ERCIGVTNPLFHSTKITSKHV) the chain is Cytoplasmic. The helical transmembrane segment at 153–175 (KMILSGVCMFAVFVALLPILGHR) threads the bilayer. Over 176–198 (DYQIQASRTWCFYNTEHIEDWED) the chain is Extracellular. A helical membrane pass occupies residues 199 to 224 (RFYLLFFSSLGLLALGISFSCNAVTG). Over 225–250 (VTLLRVKFRSQQHRQGRSHHLEMVIQ) the chain is Cytoplasmic. Residues 251–267 (LLAIMCVSCVCWSPFLV) traverse the membrane as a helical segment. The Extracellular segment spans residues 268–285 (TMANIAINGNNSPVTCET). Residues 286–307 (TLFALRMATWNQILDPWVYILL) form a helical membrane-spanning segment. Topologically, residues 308 to 366 (RKAVLRNLYKLASRCCGVNIISLHIWELSSIKNSLKVAAISESPAAEKENQQASSEAGL) are cytoplasmic.

This sequence belongs to the G-protein coupled receptor 1 family. In terms of tissue distribution, highest expression in pregnant ovary. Also found in a low extent in the kidney. In the brain, expressed in astrocytes and oligodendrocytes, and meningeal fibroblasts, but not in migroglia cells.

The protein resides in the cell membrane. Its function is as follows. Receptor for prostaglandin F2-alpha (PGF2-alpha). The activity of this receptor is mediated by G proteins which activate a phosphatidylinositol-calcium second messenger system. Initiates luteolysis in the corpus luteum. In Rattus norvegicus (Rat), this protein is Prostaglandin F2-alpha receptor (Ptgfr).